A 372-amino-acid polypeptide reads, in one-letter code: Carbamoyl phosphate synthase small chain (372 aa).

The interval 1–179 (MRAILALEDG…ALVTGKTLPP (179 aa)) is CPSase. Positions 45, 231, and 233 each coordinate L-glutamine. Residues 183 to 369 (DIVAFDFGIK…RKMIAASKRQ (187 aa)) enclose the Glutamine amidotransferase type-1 domain. The active-site Nucleophile is cysteine 258. Leucine 259, glutamine 262, asparagine 300, glycine 302, and phenylalanine 303 together coordinate L-glutamine. Active-site residues include histidine 342 and glutamate 344.

The protein belongs to the CarA family. As to quaternary structure, composed of two chains; the small (or glutamine) chain promotes the hydrolysis of glutamine to ammonia, which is used by the large (or ammonia) chain to synthesize carbamoyl phosphate. Tetramer of heterodimers (alpha,beta)4.

The catalysed reaction is hydrogencarbonate + L-glutamine + 2 ATP + H2O = carbamoyl phosphate + L-glutamate + 2 ADP + phosphate + 2 H(+). It catalyses the reaction L-glutamine + H2O = L-glutamate + NH4(+). Its pathway is amino-acid biosynthesis; L-arginine biosynthesis; carbamoyl phosphate from bicarbonate: step 1/1. The protein operates within pyrimidine metabolism; UMP biosynthesis via de novo pathway; (S)-dihydroorotate from bicarbonate: step 1/3. In terms of biological role, small subunit of the glutamine-dependent carbamoyl phosphate synthetase (CPSase). CPSase catalyzes the formation of carbamoyl phosphate from the ammonia moiety of glutamine, carbonate, and phosphate donated by ATP, constituting the first step of 2 biosynthetic pathways, one leading to arginine and/or urea and the other to pyrimidine nucleotides. The small subunit (glutamine amidotransferase) binds and cleaves glutamine to supply the large subunit with the substrate ammonia. The sequence is that of Carbamoyl phosphate synthase small chain from Akkermansia muciniphila (strain ATCC BAA-835 / DSM 22959 / JCM 33894 / BCRC 81048 / CCUG 64013 / CIP 107961 / Muc).